Consider the following 263-residue polypeptide: Transcription factor 19-like protein (263 aa).

The 58-residue stretch at Y31–L88 folds into the FHA domain. S78 is modified (phosphoserine). Disordered stretches follow at residues S140 to T164 and L189 to A225.

It is found in the nucleus. Its function is as follows. Potential transcription factor that may play a role in the regulation of genes involved in cell cycle G1/S transition. May bind to regulatory elements of genes, including the promoter of the transcription factor FOXO1. The polypeptide is Transcription factor 19-like protein (Tcf19) (Mus musculus (Mouse)).